The primary structure comprises 2463 residues: Protein TIC 214 (2463 aa).

Helical transmembrane passes span 18-38, 60-80, 86-106, 127-147, 170-190, and 297-317; these read VGLY…LFLL, FFTG…HLAL, ILLL…SGQW, LVFL…GRPM, FVGW…VFVW, and LFSI…PLLY. A coiled-coil region spans residues 326–441; the sequence is QLQRKLSNET…AARAMQEAYK (116 aa). Disordered regions lie at residues 792–841, 1230–1249, 1393–1417, 2116–2136, and 2162–2187; these read AVPK…RKVN, SIQK…GPKK, SGGR…EQDF, EEEK…KLKK, and KQRA…RKVQ. Residues 794 to 830 are compositionally biased toward basic residues; it reads PKKKKKISKSKQKNVKSKQKNVKSKQKNVKSKQKNVK. Basic and acidic residues-rich tracts occupy residues 832 to 841, 1231 to 1249, and 1397 to 1417; these read KQNEIKRKVN, IQKD…GPKK, and ETPE…EQDF. The stretch at 2049-2192 forms a coiled coil; it reads WDALVASLKQ…KRKVQVQENK (144 aa). Residues 2124–2136 show a composition bias toward basic residues; the sequence is KRKKERKKEKLKK.

Belongs to the TIC214 family. In terms of assembly, part of the Tic complex.

It localises to the plastid. The protein resides in the chloroplast inner membrane. In terms of biological role, involved in protein precursor import into chloroplasts. May be part of an intermediate translocation complex acting as a protein-conducting channel at the inner envelope. The sequence is that of Protein TIC 214 from Oenothera elata subsp. hookeri (Hooker's evening primrose).